Consider the following 412-residue polypeptide: Probable inactive allantoicase (412 aa).

Belongs to the allantoicase family.

Functionally, the function of this enzyme is unclear as allantoicase activity is not known to exist in mammals. The chain is Probable inactive allantoicase (ALLC) from Bos taurus (Bovine).